Consider the following 89-residue polypeptide: Small ribosomal subunit protein uS15 (89 aa).

A compositionally biased stretch (basic and acidic residues) spans 1–21 (MSITAERKAEVIKDNARDKGD). Positions 1–26 (MSITAERKAEVIKDNARDKGDTGSPE) are disordered.

Belongs to the universal ribosomal protein uS15 family. Part of the 30S ribosomal subunit. Forms a bridge to the 50S subunit in the 70S ribosome, contacting the 23S rRNA.

In terms of biological role, one of the primary rRNA binding proteins, it binds directly to 16S rRNA where it helps nucleate assembly of the platform of the 30S subunit by binding and bridging several RNA helices of the 16S rRNA. Its function is as follows. Forms an intersubunit bridge (bridge B4) with the 23S rRNA of the 50S subunit in the ribosome. This Sphingopyxis alaskensis (strain DSM 13593 / LMG 18877 / RB2256) (Sphingomonas alaskensis) protein is Small ribosomal subunit protein uS15.